We begin with the raw amino-acid sequence, 121 residues long: Large ribosomal subunit protein uL18 (121 aa).

Belongs to the universal ribosomal protein uL18 family. In terms of assembly, part of the 50S ribosomal subunit; part of the 5S rRNA/L5/L18/L25 subcomplex. Contacts the 5S and 23S rRNAs.

In terms of biological role, this is one of the proteins that bind and probably mediate the attachment of the 5S RNA into the large ribosomal subunit, where it forms part of the central protuberance. This Pelobacter propionicus (strain DSM 2379 / NBRC 103807 / OttBd1) protein is Large ribosomal subunit protein uL18.